The chain runs to 335 residues: Serpentine receptor class XA 10 (335 aa).

Residues Met1–Arg10 are Extracellular-facing. The chain crosses the membrane as a helical span at residues Ile11–Ser31. Over Leu32 to Tyr46 the chain is Cytoplasmic. A helical transmembrane segment spans residues Ile47 to Leu67. Over Pro68–Ser82 the chain is Extracellular. Residues Ile83–Ile103 form a helical membrane-spanning segment. Residues Leu104–Lys126 are Cytoplasmic-facing. Residues Ile127–Leu147 form a helical membrane-spanning segment. Topologically, residues Ser148–Asn177 are extracellular. The chain crosses the membrane as a helical span at residues Tyr178–Phe198. Residues Lys199 to Met238 lie on the Cytoplasmic side of the membrane. A helical membrane pass occupies residues Leu239–Val259. At Leu260–Leu276 the chain is on the extracellular side. The chain crosses the membrane as a helical span at residues Ala277–Phe297. Topologically, residues Thr298 to Ala319 are cytoplasmic.

It belongs to the nematode receptor-like protein srxa family.

Its subcellular location is the membrane. This Caenorhabditis elegans protein is Serpentine receptor class XA 10 (srxa-10).